We begin with the raw amino-acid sequence, 242 residues long: MTVKLGVNIDHVATLRSARGADFPDPLTAAKVCLGMGAEFIVVHLRGDRRHIKDKDIENLCKTYPGKIHLECAATKEMQDIALKYKPASVCLVPEFKGELTTRGGLNLNKKNFENISKITTNLQAKGIKVSLFINPAAEEVRLAKKTGAQIIELCTGPYSEAKTKKQQYKELEDLAMSSILGAELGLEVHSGHGLNYENVVPVANLEAMECLNIGFAIIAKSVFTGLAAAVMEMQEAVKERY.

A 3-amino-2-oxopropyl phosphate-binding site is contributed by N8. A 1-deoxy-D-xylulose 5-phosphate-binding site is contributed by 10–11 (DH). R19 provides a ligand contact to 3-amino-2-oxopropyl phosphate. H44 functions as the Proton acceptor in the catalytic mechanism. Residues R46 and H51 each coordinate 1-deoxy-D-xylulose 5-phosphate. Residue E71 is the Proton acceptor of the active site. T101 is a 1-deoxy-D-xylulose 5-phosphate binding site. H193 serves as the catalytic Proton donor. 3-amino-2-oxopropyl phosphate contacts are provided by residues G194 and 215–216 (GF).

Belongs to the PNP synthase family. In terms of assembly, homooctamer; tetramer of dimers.

The protein localises to the cytoplasm. It carries out the reaction 3-amino-2-oxopropyl phosphate + 1-deoxy-D-xylulose 5-phosphate = pyridoxine 5'-phosphate + phosphate + 2 H2O + H(+). Its pathway is cofactor biosynthesis; pyridoxine 5'-phosphate biosynthesis; pyridoxine 5'-phosphate from D-erythrose 4-phosphate: step 5/5. Catalyzes the complicated ring closure reaction between the two acyclic compounds 1-deoxy-D-xylulose-5-phosphate (DXP) and 3-amino-2-oxopropyl phosphate (1-amino-acetone-3-phosphate or AAP) to form pyridoxine 5'-phosphate (PNP) and inorganic phosphate. The polypeptide is Pyridoxine 5'-phosphate synthase (Elusimicrobium minutum (strain Pei191)).